A 236-amino-acid polypeptide reads, in one-letter code: Bacterial rhodopsin CSR3 (236 aa).

Topologically, residues 1–3 (MDA) are extracellular. The helical transmembrane segment at 4 to 25 (VAVVYGITAAGFAVGVAIVGYL) threads the bilayer. Residues 26–34 (YASLEGSEE) lie on the Cytoplasmic side of the membrane. Residues 35-56 (RSILAALALIPGFAGISYVAMA) form a helical membrane-spanning segment. The Extracellular segment spans residues 57 to 70 (FGIGTVTIGETTLV). A helical membrane pass occupies residues 71 to 92 (GFRYLDWVVTTPLLVGFVGYAA). At 93 to 95 (GAS) the chain is on the cytoplasmic side. A helical transmembrane segment spans residues 96 to 118 (RRAIFGVMVADALMILTGVGAVV). Residues 119-122 (ADGT) are Extracellular-facing. The helical transmembrane segment at 123 to 150 (LKWVLFGVSTVFHVSLFAYLYLVFPRSV) threads the bilayer. At 151-153 (PDD) the chain is on the cytoplasmic side. A helical transmembrane segment spans residues 154-181 (PQRIGLFSLLKNHIGLLWIAYPLVWLAG). The Extracellular portion of the chain corresponds to 182–189 (PEGLGLAT). Residues 190-222 (YVGVSITYAFLDLLAKVPYVYFFYARRQVFATK) traverse the membrane as a helical segment. At Lys205 the chain carries N6-(retinylidene)lysine. The Cytoplasmic segment spans residues 223-236 (LLRDSGEVTATPAD).

The protein belongs to the archaeal/bacterial/fungal opsin family.

It localises to the cell membrane. The polypeptide is Bacterial rhodopsin CSR3 (Haloarcula vallismortis (Halobacterium vallismortis)).